The following is a 406-amino-acid chain: MSLRIILKRDFSQCIRVFESGIKSSTTTTSNRFQAQYGNKNNDNTKRNTNNGNRFHNKYNNESRRSYPKTKYQQQYQQRKQPYIIDPRKIKFNNGTESARNAIEEIINRIYKLQKNYQIQLITNSGLKNYHLSEILQNLDLSINGLQLIDKSTSTTTTTTTTTTNNGGNELPLIKIITVREMINQYSTYLNNLKQLELIKLGSLKTLKTLDIKLKLEQKKSTTKEILIKWSINNNDFKLQKTNEIKKLIGNGNGGKNFLINMVYNKRNINKSIDTIYKYQCKGDEIEEKNLIEIELQRRQLLINNLQSLLTELNCKWIIEGDINTKMTFNVTPSISQSTTTTTTQEQEQEDYNDIEEKKLNRTERKKRKSQQQQQQQQQQQSKTNTTKKDEDEEDLDALYSFKIED.

The N-terminal 18 residues, 1-18 (MSLRIILKRDFSQCIRVF), are a transit peptide targeting the mitochondrion. Disordered stretches follow at residues 29–79 (TSNR…YQQR) and 335–406 (ISQS…KIED). Low complexity-rich tracts occupy residues 38–54 (GNKNNDNTKRNTNNGNR), 69–79 (KTKYQQQYQQR), and 371–385 (QQQQQQQQQQQSKTN).

The protein belongs to the AIM23 family.

It localises to the mitochondrion. The polypeptide is Altered inheritance of mitochondria protein 23, mitochondrial (AIM23) (Candida dubliniensis (strain CD36 / ATCC MYA-646 / CBS 7987 / NCPF 3949 / NRRL Y-17841) (Yeast)).